Here is a 546-residue protein sequence, read N- to C-terminus: Major facilitator superfamily transporter MPN_077 (546 aa).

12 helical membrane passes run 2–22, 62–82, 88–108, 179–199, 220–240, 248–268, 305–325, 344–364, 377–397, 401–421, 442–462, and 485–505; these read WGLVLLGYVLFVIEWFVIDFI, WTITLLRAVGSILCGVMVVKF, VMIMMGLMCVCFPFLIIGSPL, AFFIIFRSTIAIGGTTLIAYA, FWGFNVGLVIVAAPFLIPGVG, VWVVTFMILLVFAMLLVFAWF, LLAIAGVGTILLINPLTQTWF, PILLILWVMGYLLGYFLLSPF, FIFTANAVLVLLIVIFAATLG, VVGFTFVGIFTFIAGGFGWSL, IIFGYVWGFAYVFYSIFDIIT, and IAAIVLFVSLLLVINWVIIYL.

It belongs to the major facilitator superfamily.

The protein resides in the cell membrane. This is Major facilitator superfamily transporter MPN_077 from Mycoplasma pneumoniae (strain ATCC 29342 / M129 / Subtype 1) (Mycoplasmoides pneumoniae).